The primary structure comprises 129 residues: Chromatin accessibility complex protein 1 (129 aa).

A2 carries the post-translational modification N-acetylalanine. K102 bears the N6-acetyllysine mark. Residues 104–120 (LKMLKEKREEEEDNEDD) adopt a coiled-coil conformation. Residues 109 to 129 (EKREEEEDNEDDGSDLGEALA) are disordered. Acidic residues predominate over residues 112 to 123 (EEEEDNEDDGSD). Residue S122 is modified to Phosphoserine.

In terms of assembly, heterodimer with POLE3; binds to DNA. Component of the CHRAC ISWI chromatin remodeling complex at least composed of SMARCA5/SNF2H, BAZ1A/ACF1, CHRAC1 and POLE3; the complex preferentially binds DNA through the CHRAC1-POLE3 heterodimer and possesses ATP-dependent nucleosome-remodeling activity. Within the complex, the heterodimer with POLE3 interacts with SMARCA5/SNF2H; the interaction is direct and enhances nucleosome sliding activity by the SMARCA5/SNF2H and BAZ1A/ACF1 interaction. Within the complex, the heterodimer with POLE3 interacts with BAZ1A/ACF1; the interactions are direct. In terms of tissue distribution, ubiquitously expressed.

The protein resides in the nucleus. Forms a complex with DNA polymerase epsilon subunit POLE3 and binds naked DNA, which is then incorporated into chromatin, aided by the nucleosome remodeling activity of ISWI/SNF2H and ACF1. Does not enhance nucleosome sliding activity of the ACF-5 ISWI chromatin remodeling complex. The protein is Chromatin accessibility complex protein 1 (Chrac1) of Mus musculus (Mouse).